The primary structure comprises 230 residues: Dephospho-CoA kinase (230 aa).

The region spanning 3-225 (IIGLTGGIAT…REGGAICPTP (223 aa)) is the DPCK domain. 11–16 (ATGKST) serves as a coordination point for ATP.

It belongs to the CoaE family.

Its subcellular location is the cytoplasm. The catalysed reaction is 3'-dephospho-CoA + ATP = ADP + CoA + H(+). It functions in the pathway cofactor biosynthesis; coenzyme A biosynthesis; CoA from (R)-pantothenate: step 5/5. In terms of biological role, catalyzes the phosphorylation of the 3'-hydroxyl group of dephosphocoenzyme A to form coenzyme A. The chain is Dephospho-CoA kinase from Synechococcus sp. (strain JA-3-3Ab) (Cyanobacteria bacterium Yellowstone A-Prime).